Consider the following 1749-residue polypeptide: MQLKHLRTLLSPQDGAAKVTCMAWSQNNAKFAVCTVDRVVLLYDEHGERRDKFSTKPADMKYGRKSYMVKGMAFSPDSTKIAIGQTDNIIYVYKIGEDWGDKKVICNKFIQTSAVTCLQWPAEYVIVFGLAEGKVRLANTKTNKSSTIYGTESYVVALTTNCSGKGILSGHADGTIVRYFFDDEGSGESQGKLVNHPCPPYALAWATNSIVAAGCDRRIVAYGKEGHVLQTFDYSRDPQEREFTTAAASPGGQSVVLGSYDRLRVFNWSPRRSIWEEAKPKEIANLYTVTALAWKRDGSRLCAGTLCGGVEQFDCCLRRSIYKNKFELTYVGPSQVIVKNLSSGTRVVLKSHYGYEVEEVKILGKERYLVAHTSDTLLLGDLNTNRLSEIAWQGSGGNEKYFFENENVCMIFNAGELTLVEYGSNDSLGSVRTEFMNPHLISVRINERCQRGMEDNKKLAYLVDIKTIAIVDLIGGYNIGTISHESRVDWLELNETGHKLLFRDRKLRLHLYDIESCSKTMILNFCSYVQWVPGSDVLVAQNRNSLCVWYNIEAPERVTMSSIRGDVVGLERGGGKTEVMVTEGVTTVAYTLDEGLIEFGTAIDDGNYTRATAFLETLEMTPETEAMWKTLSKLALEARQLHTAERCFSALGHVAKARFLHETNEIADQVSREYGGEGTDFYQVRARLAMLEKNYKLAEMIFLEQNAVEEAMDMYQELHRWEECIAVAEAKGHPALEKLRRDYYQWLMDTQQEERAGELQESQGDGLAAISLYLKAGLPAKAARLVLTREELLANTELVEHITTALIKGELYERAGDLFEKIRNPQRALECYCKGNAFMKAVELARLAFPVEVVRLEEAWGDHLVQQKQLDAAINHYIEARCSIKAIEAALGARQWKKAIYILDLQDRNTASKYYPRVAQHYASLQEYEIAEELYTKGDRTKDAIDMYTQAGRWEQAHKLAMKCMRPEDVSVLYITQAQEMEKQGKYREAERLYVTVEEPDLAITMFKKHKLYDDMIRLVGKHHPDLLSDTHLHLGKELEAEGRLQEAEYHYLEAQEWKATVNMYRSSGLWEEAYRVAKAHGGANAHKHVAYLWAKSLGGEAAVRLLNKLGLLEATIDHAADNCSFEFAFELSRLAFKHKAPEIHLKYAMYLEDEGKFEEAEAEFIRAGKPKEAVLMFVHNQDWEAAQRVAEAHDPDSVAEVLVGQARGALEEKDFQKAEGLLLRAQRPGLALNYYKEAGLWSDALRICKDYVPGQLEALQEEYEREATKKGGRGVEGLVEQARQWEQAGEYSRAVDCYLKVRDSGSSGLMEKCWMKAAELSIKFLPPQRSLEVVRVVGPQLIGIGKHSAAAELYLNLDLVKEAIDAFIEGEEWNKAKRVAKELDPRYEDYVDQHYKEFLKNQGKVDSLVGVDVVAALDLYVEQGQWDKCIETATKQNYKILHKYVALYATHLIREGGYAQALALYVQHGAPANPQNFNIYKRIFTDMVSSPGTNNAEAYHSWADLRDVLFNLCENLVKSSEANSAAHEEFEMMLLISHYYATRSAAQSIKQLETVAARLSVSLLRHTQLLPADKAFYEAGTAAKEVGWENMAFIFLNRFLDLTDAIEEGTLDALDHSDFQDTDIPFEVPLPAKQHVPEAQREEVRDWVLTVSMDQRLEQVLPRDERGVYEASLVAASTGVRALPCLITGYPILRNKIEFKRPGKAANKDNWNKFLMAIKTSHSPVCQDVLKFISQWCGGLPSTSFSFQ.

Residue Met1 is modified to N-acetylmethionine. Lys4 is covalently cross-linked (Glycyl lysine isopeptide (Lys-Gly) (interchain with G-Cter in SUMO1)). WD repeat units follow at residues 14–53 (DGAA…RDKF), 64–103 (RKSY…GDKK), 110–148 (IQTS…SSTI), 150–191 (GTES…ESQG), 195–233 (NHPC…QTFD), 238–278 (PQER…WEEA), 284–323 (ANLY…SIYK), 483–520 (SHES…CSKT), and 521–559 (MILN…ERVT). Residues 593–624 (DEGLIEFGTAIDDGNYTRATAFLETLEMTPET) form a TPR 1 repeat. Position 672 is an omega-N-methylarginine (Arg672). 13 TPR repeats span residues 692–725 (EKNY…EECI), 809–842 (GELY…MKAV), 854–887 (VRLE…IKAI), 912–945 (SKYY…KDAI), 947–970 (MYTQ…PEDV), 971–1004 (SVLY…DLAI), 1042–1075 (EGRL…EEAY), 1142–1175 (PEIH…KEAV), 1276–1309 (VEGL…GSSG), 1345–1378 (IGKH…NKAK), 1411–1445 (GVDV…LHKY), 1447–1477 (ALYA…NPQN), and 1574–1607 (DKAF…TDAI).

Belongs to the IFT172 family. Interacts with IFT88. Interacts with IFT57. Interacts with RABL2/RABL2A; binds preferentially to GDP-bound RABL2. As to expression, co-localizes with RABL2/RABL2A in the midpiece of elongated spermatids within the testis (at protein level). Expressed in the flagellum of elongated spermatids and sperm in the testis lumen (at protein level).

The protein localises to the cell projection. It localises to the cilium. Functionally, required for the maintenance and formation of cilia. Plays an indirect role in hedgehog (Hh) signaling, cilia being required for all activity of the hedgehog pathway. The chain is Intraflagellar transport protein 172 homolog (Ift172) from Mus musculus (Mouse).